Reading from the N-terminus, the 526-residue chain is Lysine--tRNA ligase (526 aa).

Residues 44-52 carry the 'HIGH' region motif; that stretch reads PSGLPHIGT. The 'KMSKS' region signature appears at 290-294; it reads KISKS. K293 serves as a coordination point for ATP.

Belongs to the class-I aminoacyl-tRNA synthetase family.

It localises to the cytoplasm. It catalyses the reaction tRNA(Lys) + L-lysine + ATP = L-lysyl-tRNA(Lys) + AMP + diphosphate. In Rickettsia typhi (strain ATCC VR-144 / Wilmington), this protein is Lysine--tRNA ligase.